The primary structure comprises 253 residues: MKTQWSEILTPLLLLLLGLLHVSWAQSSCTGSPGIPGVPGIPGVPGSDGKPGTPGIKGEKGLPGLAGDHGELGEKGDAGIPGIPGKVGPKGPVGPKGAPGPPGPRGPKGGSGDYKATQKVAFSALRTVNSALRPNQAIRFEKVITNVNDNYEPRSGKFTCKVPGLYYFTYHASSRGNLCVNIVRGRDRDRMQKVLTFCDYAQNTFQVTTGGVVLKLEQEEVVHLQATDKNSLLGVEGANSIFTGFLLFPDMDV.

Positions 1–25 are cleaved as a signal peptide; it reads MKTQWSEILTPLLLLLLGLLHVSWA. Glutamine 26 bears the Pyrrolidone carboxylic acid mark. The Collagen-like domain maps to 29–112; sequence CTGSPGIPGV…GPRGPKGGSG (84 aa). Residues 29–114 are disordered; it reads CTGSPGIPGV…RGPKGGSGDY (86 aa). Residues proline 33, proline 36, proline 39, proline 51, and proline 54 each carry the 4-hydroxyproline modification. Lysine 57 and lysine 60 each carry 5-hydroxylysine. At proline 63 the chain carries 4-hydroxyproline. A compositionally biased stretch (basic and acidic residues) spans 68 to 77; it reads DHGELGEKGD. Residue lysine 75 is modified to 5-hydroxylysine. Low complexity predominate over residues 78-96; it reads AGIPGIPGKVGPKGPVGPK. Residues proline 81 and proline 84 each carry the 4-hydroxyproline modification. Lysine 90 and lysine 96 each carry 5-hydroxylysine. Residues proline 99 and proline 102 each carry the 4-hydroxyproline modification. Lysine 108 carries the 5-hydroxylysine modification. The C1q domain maps to 115-253; that stretch reads KATQKVAFSA…GFLLFPDMDV (139 aa). Cysteine 179 and cysteine 198 are joined by a disulfide. Residues aspartate 199, tyrosine 200, and glutamine 206 each contribute to the Ca(2+) site.

In terms of assembly, core component of the complement C1 complex, a calcium-dependent complex composed of 1 molecule of the C1Q subcomplex, 2 molecules of C1R and 2 molecules of C1S. The C1Q subcomplex is composed 18 subunits: 3 chains of C1QA, C1QB, and C1QC trimerize to form 6 collagen-like triple helices connected to six globular ligand-recognition modules (C1q domain). In terms of processing, hydroxylated on lysine and proline residues. Hydroxylated lysine residues can be glycosylated. Human C1Q contains up to 68.3 hydroxylysine-galactosylglucose residues and up to 2.5 hydroxylysine-galactose per molecule. Total percentage hydroxylysine residues glycosylated is 86.4%. As to expression, highest levels in spleen, lung and brain. Weaker expression in kidney and liver. In the spleen, localized mainly to the red pulp, in cells mainly of monocyte-macrophage lineage. In white pulp, localized in specific dendritic cells such as those from the periarteriolar lymphatic sheath (PALS).

The protein localises to the secreted. Its subcellular location is the cell surface. The C1Q subcomplex is inhibited by sulfated molecules, such as triterpenoid sulfates, heparan sulfate, or chondroitin sulfates. Its function is as follows. Core component of the complement C1 complex, a multiprotein complex that initiates the classical pathway of the complement system, a cascade of proteins that leads to phagocytosis and breakdown of pathogens and signaling that strengthens the adaptive immune system. The classical complement pathway is initiated by the C1Q subcomplex of the C1 complex, which specifically binds IgG or IgM immunoglobulins complexed with antigens, forming antigen-antibody complexes on the surface of pathogens: C1QA, together with C1QB and C1QC, specifically recognizes and binds the Fc regions of IgG or IgM via its C1q domain. Immunoglobulin-binding activates the proenzyme C1R, which cleaves C1S, initiating the proteolytic cascade of the complement system. The C1Q subcomplex is activated by a hexamer of IgG complexed with antigens, while it is activated by a pentameric IgM. The C1Q subcomplex also recognizes and binds phosphatidylserine exposed on the surface of cells undergoing programmed cell death, possibly promoting activation of the complement system. The chain is Complement C1q subcomponent subunit B from Rattus norvegicus (Rat).